A 589-amino-acid chain; its full sequence is Serine/threonine-protein kinase STE7 homolog (589 aa).

Basic and acidic residues predominate over residues 1–18 (MTRTTRIDTQEATKHKDL). Disordered regions lie at residues 1–162 (MTRT…DPDN) and 185–233 (RQHY…ASSQ). Residues 24–33 (PLSLSSNPNP) show a composition bias toward low complexity. Polar residues predominate over residues 57-69 (VKSTSGSLRSSDM). Over residues 92-121 (PTASSSATSTPTSNITGSSSASSIQFAQKS) the composition is skewed to low complexity. Composition is skewed to polar residues over residues 127 to 136 (IVSQTLSRPS) and 144 to 162 (SGYS…DPDN). Basic residues predominate over residues 185–203 (RQHYQNSHHHLPTTNRKRQ). The segment covering 206–220 (ISSISPTKSSAASSS) has biased composition (low complexity). Residues 221-233 (LEPQIQSLPASSQ) show a composition bias toward polar residues. One can recognise a Protein kinase domain in the interval 249–565 (LLTLKQLGSG…QLLEDKEHFF (317 aa)). Residues 255–263 (LGSGNSGSV) and lysine 278 contribute to the ATP site. Aspartate 374 (proton acceptor) is an active-site residue. Serine 402 is modified (phosphoserine). A Phosphothreonine modification is found at threonine 408. The disordered stretch occupies residues 473 to 499 (IAAERNGQNSPSRSRKNKQKGNGYNSY).

Belongs to the protein kinase superfamily. STE Ser/Thr protein kinase family. MAP kinase kinase subfamily.

It catalyses the reaction L-seryl-[protein] + ATP = O-phospho-L-seryl-[protein] + ADP + H(+). It carries out the reaction L-threonyl-[protein] + ATP = O-phospho-L-threonyl-[protein] + ADP + H(+). The enzyme catalyses L-tyrosyl-[protein] + ATP = O-phospho-L-tyrosyl-[protein] + ADP + H(+). The sequence is that of Serine/threonine-protein kinase STE7 homolog (HST7) from Candida albicans (strain SC5314 / ATCC MYA-2876) (Yeast).